The sequence spans 123 residues: PCNA-associated factor (123 aa).

Residues 1–123 (MVRTKADCAG…SEEAADSGDE (123 aa)) form a disordered region. The D-box signature appears at 26-37 (RKTFGSSSSGSN). A PIP-box motif is present at residues 66 to 77 (QKGIGDFFGSPS). A KEN box motif is present at residues 83–85 (KEN). Positions 93 to 105 (EAGGSGAGKKPRK) match the Initiation motif motif. A compositionally biased stretch (acidic residues) spans 113-123 (PSEEAADSGDE).

As to quaternary structure, interacts with pcna.

The protein localises to the nucleus. The protein resides in the cytoplasm. It is found in the perinuclear region. Functionally, PCNA-binding protein that acts as a regulator of DNA repair during DNA replication. Following DNA damage, the interaction with pcna is disrupted, facilitating the interaction between monoubiquitinated pcna and the translesion DNA synthesis DNA polymerase eta (polh) at stalled replisomes, facilitating the bypass of replication-fork-blocking lesions. Also acts as a regulator of centrosome number. The sequence is that of PCNA-associated factor from Xenopus laevis (African clawed frog).